The sequence spans 597 residues: Probable E3 ubiquitin-protein ligase ARI1 (597 aa).

The TRIAD supradomain stretch occupies residues 119-333 (SQMSCDVCME…IAGHSCGRYQ (215 aa)). Cysteine 123, cysteine 126, cysteine 140, histidine 142, cysteine 145, cysteine 148, cysteine 167, cysteine 172, cysteine 214, cysteine 220, cysteine 236, cysteine 238, cysteine 243, cysteine 246, histidine 251, cysteine 256, cysteine 283, and cysteine 286 together coordinate Zn(2+). The RING-type 1 zinc finger occupies 123–172 (CDVCMEDLPGDHMTRMDCGHCFCNNCWTEHFTVQINEGQSKRIRCMAHQC). An IBR-type zinc finger spans residues 194–256 (AKFDRYLLES…LCQAHSPCSC (63 aa)). The RING-type 2; atypical zinc finger occupies 283–311 (CPKCYKPVEKNGGCNLVRCICGQCFCWLC). Cysteine 296 is an active-site residue. Cysteine 301, cysteine 303, cysteine 308, cysteine 311, histidine 319, and cysteine 329 together coordinate Zn(2+). Positions 536–575 (FQPLDSGTSGVTSRPEQASGSRSSEDTICSSSQKRPKKEG) are disordered. Residues 540–568 (DSGTSGVTSRPEQASGSRSSEDTICSSSQ) show a composition bias toward polar residues.

Belongs to the RBR family. Ariadne subfamily. Zn(2+) serves as cofactor. As to expression, ubiquitous.

It catalyses the reaction [E2 ubiquitin-conjugating enzyme]-S-ubiquitinyl-L-cysteine + [acceptor protein]-L-lysine = [E2 ubiquitin-conjugating enzyme]-L-cysteine + [acceptor protein]-N(6)-ubiquitinyl-L-lysine.. The protein operates within protein modification; protein ubiquitination. Functionally, might act as an E3 ubiquitin-protein ligase, or as part of E3 complex, which accepts ubiquitin from specific E2 ubiquitin-conjugating enzymes and then transfers it to substrates. The sequence is that of Probable E3 ubiquitin-protein ligase ARI1 (ARI1) from Arabidopsis thaliana (Mouse-ear cress).